Reading from the N-terminus, the 560-residue chain is Dihydroxy-acid dehydratase (560 aa).

Position 80 (D80) interacts with Mg(2+). A [2Fe-2S] cluster-binding site is contributed by C121. D122 and K123 together coordinate Mg(2+). K123 carries the post-translational modification N6-carboxylysine. C194 lines the [2Fe-2S] cluster pocket. Residue E447 coordinates Mg(2+). The active-site Proton acceptor is S473.

This sequence belongs to the IlvD/Edd family. In terms of assembly, homodimer. Requires [2Fe-2S] cluster as cofactor. Mg(2+) is required as a cofactor.

The enzyme catalyses (2R)-2,3-dihydroxy-3-methylbutanoate = 3-methyl-2-oxobutanoate + H2O. The catalysed reaction is (2R,3R)-2,3-dihydroxy-3-methylpentanoate = (S)-3-methyl-2-oxopentanoate + H2O. It participates in amino-acid biosynthesis; L-isoleucine biosynthesis; L-isoleucine from 2-oxobutanoate: step 3/4. Its pathway is amino-acid biosynthesis; L-valine biosynthesis; L-valine from pyruvate: step 3/4. Its function is as follows. Functions in the biosynthesis of branched-chain amino acids. Catalyzes the dehydration of (2R,3R)-2,3-dihydroxy-3-methylpentanoate (2,3-dihydroxy-3-methylvalerate) into 2-oxo-3-methylpentanoate (2-oxo-3-methylvalerate) and of (2R)-2,3-dihydroxy-3-methylbutanoate (2,3-dihydroxyisovalerate) into 2-oxo-3-methylbutanoate (2-oxoisovalerate), the penultimate precursor to L-isoleucine and L-valine, respectively. The polypeptide is Dihydroxy-acid dehydratase (Chlorobaculum parvum (strain DSM 263 / NCIMB 8327) (Chlorobium vibrioforme subsp. thiosulfatophilum)).